A 191-amino-acid chain; its full sequence is NADH-quinone oxidoreductase subunit B (191 aa).

The [4Fe-4S] cluster site is built by cysteine 70, cysteine 71, cysteine 135, and cysteine 165.

It belongs to the complex I 20 kDa subunit family. NDH-1 is composed of 14 different subunits. Subunits NuoB, C, D, E, F, and G constitute the peripheral sector of the complex. Requires [4Fe-4S] cluster as cofactor.

The protein resides in the cell inner membrane. It carries out the reaction a quinone + NADH + 5 H(+)(in) = a quinol + NAD(+) + 4 H(+)(out). Its function is as follows. NDH-1 shuttles electrons from NADH, via FMN and iron-sulfur (Fe-S) centers, to quinones in the respiratory chain. The immediate electron acceptor for the enzyme in this species is believed to be ubiquinone. Couples the redox reaction to proton translocation (for every two electrons transferred, four hydrogen ions are translocated across the cytoplasmic membrane), and thus conserves the redox energy in a proton gradient. The sequence is that of NADH-quinone oxidoreductase subunit B from Parvibaculum lavamentivorans (strain DS-1 / DSM 13023 / NCIMB 13966).